The chain runs to 87 residues: Small ribosomal subunit protein bS16 (87 aa).

It belongs to the bacterial ribosomal protein bS16 family.

This Fusobacterium nucleatum subsp. nucleatum (strain ATCC 25586 / DSM 15643 / BCRC 10681 / CIP 101130 / JCM 8532 / KCTC 2640 / LMG 13131 / VPI 4355) protein is Small ribosomal subunit protein bS16.